A 492-amino-acid chain; its full sequence is Coagulation factor X (492 aa).

The first 23 residues, 1 to 23 (MAGLLHLVLLSTALGGLLRPAGS), serve as a signal peptide directing secretion. Positions 24–40 (VFLPRDQAHRVLQRARR) are excised as a propeptide. The 45-residue stretch at 41–85 (ANSFLEEVKQGNLERECLEEACSLEEAREVFEDAEQTDEFWSKYK) folds into the Gla domain. 4-carboxyglutamate occurs at positions 46, 47, 54, 56, 59, 60, 65, 66, 69, 72, 75, and 79. Cysteine 57 and cysteine 62 are disulfide-bonded. Residues 86–122 (DGDQCEGHPCLNQGHCKDGIGDYTCTCAEGFEGKNCE) enclose the EGF-like 1; calcium-binding domain. 11 disulfide bridges follow: cysteine 90/cysteine 101, cysteine 95/cysteine 110, cysteine 112/cysteine 121, cysteine 129/cysteine 140, cysteine 136/cysteine 149, cysteine 151/cysteine 164, cysteine 172/cysteine 341, cysteine 240/cysteine 245, cysteine 260/cysteine 276, cysteine 389/cysteine 403, and cysteine 414/cysteine 442. Aspartate 103 is modified ((3R)-3-hydroxyaspartate). Positions 125–165 (TREICSLDNGGCDQFCREERSEVRCSCAHGYVLGDDSKSCV) constitute an EGF-like 2 domain. A propeptide spans 183–233 (WAIHTSEDALDASELEHYDPADLSPTESSLDLLGLNRTEPSAGEDGSQVVR) (activation peptide). Position 200 is a sulfotyrosine (tyrosine 200). O-linked (GalNAc...) threonine glycosylation occurs at threonine 208. Residue asparagine 218 is glycosylated (N-linked (GlcNAc...) asparagine). The region spanning 234-466 (IVGGRDCAEG…FLKWIDKIMK (233 aa)) is the Peptidase S1 domain. Active-site charge relay system residues include histidine 275 and aspartate 321. Serine 418 functions as the Charge relay system in the catalytic mechanism. The disordered stretch occupies residues 472-492 (AGSRGHSEAPATWTVPPPLPL). A propeptide spans 476–492 (GHSEAPATWTVPPPLPL) (may be removed but is not necessary for activation). Threonine 485 carries O-linked (GalNAc...) threonine glycosylation.

Belongs to the peptidase S1 family. As to quaternary structure, the two chains are formed from a single-chain precursor by the excision of two Arg residues and are held together by 1 or more disulfide bonds. Forms a heterodimer with SERPINA5. Interacts (activated) with guianensin, an anticoagulant protein from Simulium guianense saliva. Interacts (activated) with simukunin, an anticoagulant protein from Simulium vittatum saliva. The vitamin K-dependent, enzymatic carboxylation of some glutamate residues allows the modified protein to bind calcium. In terms of processing, N- and O-glycosylated. Post-translationally, proteolytically cleaved and activated by cathepsin CTSG. The activation peptide is cleaved by factor IXa (in the intrinsic pathway), or by factor VIIa (in the extrinsic pathway). The iron and 2-oxoglutarate dependent 3-hydroxylation of aspartate and asparagine is (R) stereospecific within EGF domains.

The protein resides in the secreted. It catalyses the reaction Selective cleavage of Arg-|-Thr and then Arg-|-Ile bonds in prothrombin to form thrombin.. Inhibited by SERPINA5. Functionally, factor Xa is a vitamin K-dependent glycoprotein that converts prothrombin to thrombin in the presence of factor Va, calcium and phospholipid during blood clotting. Factor Xa activates pro-inflammatory and pro-fibrotic signaling pathways in a protease-activated receptor (PAR)-dependent manner. This is Coagulation factor X (F10) from Bos taurus (Bovine).